A 1423-amino-acid chain; its full sequence is Interphotoreceptor matrix proteoglycan 2 (1423 aa).

The first 27 residues, 1-27 (MFAFLWKISLCLLVLGVITGDPQAVAA), serve as a signal peptide directing secretion. Topologically, residues 28–1289 (EEKQAKDASP…EYVSEPLVVG (1262 aa)) are extracellular. Residue Asn150 is glycosylated (N-linked (GlcNAc...) asparagine). In terms of domain architecture, SEA 1 spans 245-358 (TEQMIEFSIV…NPTVVYTISD (114 aa)). A hyaluronan-binding motif involved in chondroitin sulfate A-binding region spans residues 265–273 (SDPDTAKYQ). 2 N-linked (GlcNAc...) asparagine glycosylation sites follow: Asn325 and Asn375. Disordered regions lie at residues 423–469 (AERP…DSEV), 522–559 (DSSDEFEDTGLSDDFLLPSSPSSHLVPEEPPSTDDYTA), and 577–602 (TKRTVTAEKEVVTQGSPADSSSADSL). The span at 523-532 (SSDEFEDTGL) shows a compositional bias: acidic residues. Over residues 537–546 (LLPSSPSSHL) the composition is skewed to low complexity. Residues 577 to 587 (TKRTVTAEKEV) show a composition bias toward basic and acidic residues. N-linked (GlcNAc...) asparagine glycosylation occurs at Asn676. A disordered region spans residues 886–907 (FEVSTDTSTEEQQSLDSSLADR). The segment covering 889–902 (STDTSTEEQQSLDS) has biased composition (polar residues). One can recognise an SEA 2 domain in the interval 1083-1196 (RALVVFFSLR…YSLDVESGEQ (114 aa)). Asn1128, Asn1142, and Asn1160 each carry an N-linked (GlcNAc...) asparagine glycan. 2 consecutive EGF-like domains span residues 1196–1234 (QADPCKFQACNEFSECLVNRWSGEAECVCNPGYLSIDGL) and 1237–1279 (NSIC…EHCE). Cystine bridges form between Cys1200-Cys1211, Cys1205-Cys1222, Cys1240-Cys1253, Cys1247-Cys1263, and Cys1265-Cys1278. The tract at residues 1266-1274 (RVGENWWYR) is hyaluronan-binding motif involved in chondroitin sulfate C-binding. The chain crosses the membrane as a helical span at residues 1290 to 1310 (IAIASVAGFLLVASAVIFFLA). Over 1311 to 1423 (RTLRDQYTKS…FVRQHQMKLL (113 aa)) the chain is Cytoplasmic. The tract at residues 1322–1327 (TEDSQG) is hyaluronan-binding motif involved in chondroitin sulfate C-binding.

Highly glycosylated (N- and O-linked carbohydrates). Expressed in retina.

It is found in the photoreceptor outer segment membrane. Its subcellular location is the photoreceptor inner segment membrane. It localises to the secreted. The protein localises to the extracellular space. The protein resides in the extracellular matrix. It is found in the interphotoreceptor matrix. Its function is as follows. Chondroitin sulfate- and hyaluronan-binding proteoglycan involved in the organization of interphotoreceptor matrix. The sequence is that of Interphotoreceptor matrix proteoglycan 2 (IMPG2) from Gallus gallus (Chicken).